Consider the following 400-residue polypeptide: Delta(12) fatty acid desaturase (400 aa).

The helical transmembrane segment at 91–111 (LAWPAYWIMQGIVCTGIWVLA) threads the bilayer. The short motif at 112 to 116 (HECGH) is the Histidine box-1 element. A Histidine box-2 motif is present at residues 148-152 (HSKHH). 3 helical membrane passes run 199–219 (IVTLFWMVIQFLFGWPAYLIM), 245–265 (FFDIIISDLGVLAALGALIYA), and 277–297 (YYIVPYLFVNFWLVLITFLQH). The Histidine box-3 motif lies at 339–343 (HVAHH).

It belongs to the fatty acid desaturase type 1 family.

It is found in the membrane. The enzyme catalyses (9Z)-octadecenoyl-CoA + 2 Fe(II)-[cytochrome b5] + O2 + 2 H(+) = (9Z,12Z)-octadecadienoyl-CoA + 2 Fe(III)-[cytochrome b5] + 2 H2O. It carries out the reaction (9Z)-hexadecenoyl-CoA + 2 Fe(II)-[cytochrome b5] + O2 + 2 H(+) = (9Z,12Z)-hexadecadienoyl-CoA + 2 Fe(III)-[cytochrome b5] + 2 H2O. It participates in lipid metabolism; polyunsaturated fatty acid biosynthesis. Functionally, catalyzes the desaturation of oleic acid (Delta(9)-18:1) to linoleic acid (Delta(9), Delta(12)-18:2). In Mortierella alpina (Oleaginous fungus), this protein is Delta(12) fatty acid desaturase.